The following is a 250-amino-acid chain: Methionine aminopeptidase (250 aa).

H77 contacts substrate. The a divalent metal cation site is built by D94, D105, and H169. Residue H176 coordinates substrate. Positions 202 and 235 each coordinate a divalent metal cation.

It belongs to the peptidase M24A family. Methionine aminopeptidase type 1 subfamily. In terms of assembly, monomer. Co(2+) is required as a cofactor. The cofactor is Zn(2+). Mn(2+) serves as cofactor. Requires Fe(2+) as cofactor.

The catalysed reaction is Release of N-terminal amino acids, preferentially methionine, from peptides and arylamides.. Removes the N-terminal methionine from nascent proteins. The N-terminal methionine is often cleaved when the second residue in the primary sequence is small and uncharged (Met-Ala-, Cys, Gly, Pro, Ser, Thr, or Val). Requires deformylation of the N(alpha)-formylated initiator methionine before it can be hydrolyzed. This chain is Methionine aminopeptidase, found in Mycoplasmoides gallisepticum (strain R(low / passage 15 / clone 2)) (Mycoplasma gallisepticum).